The chain runs to 486 residues: MILHCPVSLSLSFHLNLRTSRIGNIGVTRVNASQRNHSKKLTKNLRNPRRTKLPPDFGVNLFLRKPKIEPLVIDDDDEQVQESVNDDDDAVVWEPEEIEAISSLFQKRIPQKPDKPSRVRPLPLPQPHKLRPLGLPTPKKNIIRSPALSSVSKQVYKDPSFLIGLAREIKSLPSSDADVSLVLNKWVSFLRKGSLSTTIRELGHMGLPERALQTYHWAEKHSHLVPDNRILASTIQVLAKHHELKLLKFDNSLASKNVIEAMIKGCIEGGWLNLARKLILISKSNNRILDSSVYVKMILEIAKNPDKYHLVVALLEELKKREDLKLSQQDCTSIMKICVKLGEFELVESLFDWFKASNREPSVVMYTTMIHSRYSEQKYREAMSVVWEMEESNCLLDLPAYRVVIKLFVALDDLGRAMRYYSKLKEAGFSPTYDIYRDMISVYTASGRLTKCKEICKEVEDAGLRLDKDTSFRLLQLEKQTMSLLH.

The interval 111–137 (QKPDKPSRVRPLPLPQPHKLRPLGLPT) is disordered. 5 PPR repeats span residues 290-321 (DSSV…LKKR), 327-361 (SQQD…NREP), 362-396 (SVVM…NCLL), 397-431 (DLPA…GFSP), and 432-466 (TYDI…GLRL).

It belongs to the PPR family. P subfamily.

The protein is Pentatricopeptide repeat-containing protein At2g01860 (EMB975) of Arabidopsis thaliana (Mouse-ear cress).